The following is a 798-amino-acid chain: Elongation factor G, mitochondrial (798 aa).

The N-terminal 24 residues, 1–24 (MRVIRAAAALNSSCAASSRQGARY), are a transit peptide targeting the mitochondrion. Residues 97 to 383 (SMVRNIGIAA…AVCDYLPNPG (287 aa)) enclose the tr-type G domain. Residues 106-113 (AHIDSGKT), 181-185 (DTPGH), and 235-238 (NKMD) each bind GTP.

It belongs to the TRAFAC class translation factor GTPase superfamily. Classic translation factor GTPase family. EF-G/EF-2 subfamily.

The protein resides in the mitochondrion. The protein operates within protein biosynthesis; polypeptide chain elongation. Mitochondrial GTPase that catalyzes the GTP-dependent ribosomal translocation step during translation elongation. During this step, the ribosome changes from the pre-translocational (PRE) to the post-translocational (POST) state as the newly formed A-site-bound peptidyl-tRNA and P-site-bound deacylated tRNA move to the P and E sites, respectively. Catalyzes the coordinated movement of the two tRNA molecules, the mRNA and conformational changes in the ribosome. The protein is Elongation factor G, mitochondrial of Chaetomium globosum (strain ATCC 6205 / CBS 148.51 / DSM 1962 / NBRC 6347 / NRRL 1970) (Soil fungus).